A 1113-amino-acid chain; its full sequence is Carbamoyl phosphate synthase large chain (1113 aa).

Residues 1–407 are carboxyphosphate synthetic domain; it reads MPKRSDINHV…ALNKALRSLE (407 aa). 12 residues coordinate ATP: arginine 134, arginine 174, glycine 180, glycine 181, glutamate 213, isoleucine 215, glutamate 220, glycine 246, valine 247, histidine 248, glutamine 290, and glutamate 304. One can recognise an ATP-grasp 1 domain in the interval 138-333; the sequence is KDIVTTIGGE…IAKMAAKLAI (196 aa). Mg(2+)-binding residues include glutamine 290, glutamate 304, and asparagine 306. Residues glutamine 290, glutamate 304, and asparagine 306 each contribute to the Mn(2+) site. Positions 408 to 565 are oligomerization domain; it reads TKQQGFWTKP…ELDPAAESEV (158 aa). The segment at 566–967 is carbamoyl phosphate synthetic domain; sequence APQTEREKVL…AYAKAEAGAF (402 aa). The region spanning 695-886 is the ATP-grasp 2 domain; the sequence is GALLNREQLP…LAKAASRIAV (192 aa). 10 residues coordinate ATP: arginine 731, arginine 770, leucine 772, glutamate 777, glycine 802, isoleucine 803, histidine 804, serine 805, glutamine 845, and glutamate 857. Mg(2+)-binding residues include glutamine 845, glutamate 857, and asparagine 859. Glutamine 845, glutamate 857, and asparagine 859 together coordinate Mn(2+). The 146-residue stretch at 968–1113 folds into the MGS-like domain; that stretch reads GALPTEGTVF…LQELDHAVKA (146 aa). An allosteric domain region spans residues 968–1113; sequence GALPTEGTVF…LQELDHAVKA (146 aa).

It belongs to the CarB family. As to quaternary structure, composed of two chains; the small (or glutamine) chain promotes the hydrolysis of glutamine to ammonia, which is used by the large (or ammonia) chain to synthesize carbamoyl phosphate. Tetramer of heterodimers (alpha,beta)4. Requires Mg(2+) as cofactor. It depends on Mn(2+) as a cofactor.

It carries out the reaction hydrogencarbonate + L-glutamine + 2 ATP + H2O = carbamoyl phosphate + L-glutamate + 2 ADP + phosphate + 2 H(+). It catalyses the reaction hydrogencarbonate + NH4(+) + 2 ATP = carbamoyl phosphate + 2 ADP + phosphate + 2 H(+). It participates in amino-acid biosynthesis; L-arginine biosynthesis; carbamoyl phosphate from bicarbonate: step 1/1. The protein operates within pyrimidine metabolism; UMP biosynthesis via de novo pathway; (S)-dihydroorotate from bicarbonate: step 1/3. In terms of biological role, large subunit of the glutamine-dependent carbamoyl phosphate synthetase (CPSase). CPSase catalyzes the formation of carbamoyl phosphate from the ammonia moiety of glutamine, carbonate, and phosphate donated by ATP, constituting the first step of 2 biosynthetic pathways, one leading to arginine and/or urea and the other to pyrimidine nucleotides. The large subunit (synthetase) binds the substrates ammonia (free or transferred from glutamine from the small subunit), hydrogencarbonate and ATP and carries out an ATP-coupled ligase reaction, activating hydrogencarbonate by forming carboxy phosphate which reacts with ammonia to form carbamoyl phosphate. This Corynebacterium glutamicum (strain ATCC 13032 / DSM 20300 / JCM 1318 / BCRC 11384 / CCUG 27702 / LMG 3730 / NBRC 12168 / NCIMB 10025 / NRRL B-2784 / 534) protein is Carbamoyl phosphate synthase large chain.